A 299-amino-acid chain; its full sequence is MTDGSAMTLRDEARAKVNLTLRVVGRRPDGYHELESVVAFADCADHLTLQPGAALSLTTIGPGAQDCGDSADNLVLKAARLLGERVPDLTTGAFTLDKHLPVAAGIGGGSADAAAALRLLARANDLAVDDPRLIEAARLTGADVPVCLPSKPCVMTGVGEKLSPLPLPRIPAVMVNPRVPVATKDVFTALGLKPGSLAVGATDVLAAPAWPEAGAPLADWVVALEAGTNDLEPPALKVEPVVGTVLEALRATAGVQLARMSGSGATCFALYADDASARAAADALCAAHPGWWVHAGSLS.

Residue Lys-16 is part of the active site. 101–111 provides a ligand contact to ATP; that stretch reads PVAAGIGGGSA. Asp-143 is a catalytic residue.

It belongs to the GHMP kinase family. IspE subfamily.

It catalyses the reaction 4-CDP-2-C-methyl-D-erythritol + ATP = 4-CDP-2-C-methyl-D-erythritol 2-phosphate + ADP + H(+). Its pathway is isoprenoid biosynthesis; isopentenyl diphosphate biosynthesis via DXP pathway; isopentenyl diphosphate from 1-deoxy-D-xylulose 5-phosphate: step 3/6. Functionally, catalyzes the phosphorylation of the position 2 hydroxy group of 4-diphosphocytidyl-2C-methyl-D-erythritol. The polypeptide is 4-diphosphocytidyl-2-C-methyl-D-erythritol kinase (Rhodopseudomonas palustris (strain ATCC BAA-98 / CGA009)).